Here is a 943-residue protein sequence, read N- to C-terminus: UvrABC system protein A (943 aa).

Glycine 32 to serine 39 serves as a coordination point for ATP. The C4-type zinc finger occupies cysteine 251–cysteine 278. ABC transporter domains follow at residues tryptophan 308–isoleucine 589 and glycine 609–lysine 937. Glycine 641–serine 648 lines the ATP pocket. The segment at cysteine 740–cysteine 766 adopts a C4-type zinc-finger fold.

The protein belongs to the ABC transporter superfamily. UvrA family. In terms of assembly, forms a heterotetramer with UvrB during the search for lesions.

The protein localises to the cytoplasm. In terms of biological role, the UvrABC repair system catalyzes the recognition and processing of DNA lesions. UvrA is an ATPase and a DNA-binding protein. A damage recognition complex composed of 2 UvrA and 2 UvrB subunits scans DNA for abnormalities. When the presence of a lesion has been verified by UvrB, the UvrA molecules dissociate. The polypeptide is UvrABC system protein A (Streptococcus mutans serotype c (strain ATCC 700610 / UA159)).